A 356-amino-acid chain; its full sequence is Leucine carboxyl methyltransferase 1 (356 aa).

S-adenosyl-L-methionine contacts are provided by residues R78, G101, D127, 183–184, and E218; that span reads DL.

Belongs to the methyltransferase superfamily. LCMT family.

It carries out the reaction [phosphatase 2A protein]-C-terminal L-leucine + S-adenosyl-L-methionine = [phosphatase 2A protein]-C-terminal L-leucine methyl ester + S-adenosyl-L-homocysteine. Methylates the carboxyl group of the C-terminal leucine residue of protein phosphatase 2A catalytic subunits to form alpha-leucine ester residues. This is Leucine carboxyl methyltransferase 1 (PPM1) from Cryptococcus neoformans var. neoformans serotype D (strain JEC21 / ATCC MYA-565) (Filobasidiella neoformans).